We begin with the raw amino-acid sequence, 225 residues long: UPF0700 transmembrane protein RA0705 (225 aa).

6 helical membrane-spanning segments follow: residues 17 to 37, 66 to 86, 95 to 115, 117 to 137, 168 to 188, and 194 to 214; these read VGLA…AIGL, GLLL…GVMI, ALLF…QPEL, FVSL…IEGL, IIQI…AVLV, and LALW…FQIP.

Belongs to the UPF0700 family.

It localises to the cell membrane. The protein is UPF0700 transmembrane protein RA0705 of Rhizobium meliloti (strain 1021) (Ensifer meliloti).